A 255-amino-acid chain; its full sequence is Snake venom serine protease HS112 (255 aa).

The signal sequence occupies residues 1–18; that stretch reads MVLIRVIANLLILQLSYA. Positions 19-24 are excised as a propeptide; that stretch reads QKSSEL. The Peptidase S1 domain maps to 25-246; it reads VIGGDECDIN…YLPWIQSIIA (222 aa). 6 cysteine pairs are disulfide-bonded: Cys31/Cys162, Cys49/Cys65, Cys97/Cys253, Cys141/Cys207, Cys173/Cys186, and Cys197/Cys222. Catalysis depends on charge relay system residues His64 and Asp109. Asn169 carries an N-linked (GlcNAc...) asparagine glycan. Residue Ser201 is the Charge relay system of the active site. The N-linked (GlcNAc...) asparagine glycan is linked to Asn248.

This sequence belongs to the peptidase S1 family. Snake venom subfamily. In terms of assembly, monomer. Expressed by the venom gland.

It localises to the secreted. Functionally, snake venom serine protease that may act in the hemostasis system of the prey. This is Snake venom serine protease HS112 from Bothrops jararaca (Jararaca).